The primary structure comprises 429 residues: Cell wall protein ECM33 (429 aa).

The signal sequence occupies residues 1-19; that stretch reads MQFKNALTATAILSASALA. N21, N56, N82, N196, N209, N227, N234, N241, N267, N279, N304, and N328 each carry an N-linked (GlcNAc...) asparagine glycan. At S339 the chain carries Phosphoserine. The span at 361–401 shows a compositional bias: low complexity; sequence LSSTSTESSKSSATSSASSSGDASNAQANVSASASSSSSSS. Residues 361-410 are disordered; it reads LSSTSTESSKSSATSSASSSGDASNAQANVSASASSSSSSSKKSKGAAPE. N389 is a glycosylation site (N-linked (GlcNAc...) asparagine). Residue G406 is the site of GPI-anchor amidated glycine attachment. A propeptide spans 407–429 (removed in mature form); that stretch reads AAPELVPATSFMGVVAAVAVALL.

The protein belongs to the SPS2 family. In terms of processing, the GPI-anchor is attached to the protein in the endoplasmic reticulum and serves to target the protein to the cell surface. There, the glucosamine-inositol phospholipid moiety is cleaved off and the GPI-modified mannoprotein is covalently attached via its lipidless GPI glycan remnant to the 1,6-beta-glucan of the outer cell wall layer.

It is found in the cell membrane. The protein resides in the secreted. It localises to the cell wall. Functionally, required for proper cell wall integrity and for the correct assembly of the mannoprotein outer layer of the cell wall. Important for apical bud growth. This Saccharomyces cerevisiae (strain AWRI1631) (Baker's yeast) protein is Cell wall protein ECM33 (ECM33).